A 185-amino-acid chain; its full sequence is Ribosome-recycling factor (185 aa).

The protein belongs to the RRF family.

It localises to the cytoplasm. Functionally, responsible for the release of ribosomes from messenger RNA at the termination of protein biosynthesis. May increase the efficiency of translation by recycling ribosomes from one round of translation to another. The protein is Ribosome-recycling factor of Streptococcus pyogenes serotype M1.